The primary structure comprises 327 residues: T-cell surface glycoprotein CD1a (327 aa).

The first 16 residues, 1–16 (MLFLLLPLLAVLPGDG), serve as a signal peptide directing secretion. The Extracellular portion of the chain corresponds to 17 to 300 (NADGLKEPLS…VLYWEHHSSV (284 aa)). 3 N-linked (GlcNAc...) asparagine glycosylation sites follow: asparagine 37, asparagine 60, and asparagine 74. 90–94 (RTIRS) contacts a D-galactosylceramide. 2 disulfide bridges follow: cysteine 119/cysteine 183 and cysteine 223/cysteine 278. The N-linked (GlcNAc...) asparagine glycan is linked to asparagine 145. A D-galactosylceramide-binding residues include glutamate 171 and threonine 175. Positions 184–291 (PRFILGLLDA…HSSLEGQDIV (108 aa)) constitute an Ig-like domain. A helical transmembrane segment spans residues 301-321 (GFIILAVIVPLLLLIGLALWF). The Cytoplasmic segment spans residues 322–327 (RKRCFC).

As to quaternary structure, heterodimer with B2M (beta-2-microglobulin). Interacts with CD74. As to expression, expressed on cortical thymocytes, epidermal Langerhans cells, dendritic cells, on certain T-cell leukemias, and in various other tissues.

It localises to the cell membrane. Its subcellular location is the membrane raft. The protein resides in the endosome membrane. Its function is as follows. Antigen-presenting protein that binds self and non-self lipid and glycolipid antigens and presents them to T-cell receptors on natural killer T-cells. The chain is T-cell surface glycoprotein CD1a (CD1A) from Homo sapiens (Human).